A 78-amino-acid polypeptide reads, in one-letter code: Large ribosomal subunit protein bL28 (78 aa).

Residues 1–20 (MSRVCQVTGKGPVTGNNISH) form a disordered region.

This sequence belongs to the bacterial ribosomal protein bL28 family.

This is Large ribosomal subunit protein bL28 from Pseudomonas putida (strain W619).